A 64-amino-acid chain; its full sequence is MFTLKKSLLLLFFLGTINLSLCEQERNAEEERRDDLGERQAEVEKRFFPIVGKLLFGLFGLLGK.

The N-terminal stretch at 1 to 22 (MFTLKKSLLLLFFLGTINLSLC) is a signal peptide. The propeptide occupies 23–46 (EQERNAEEERRDDLGERQAEVEKR). At L62 the chain carries Leucine amide.

This sequence belongs to the frog skin active peptide (FSAP) family. Temporin subfamily. Expressed by the skin glands.

The protein resides in the secreted. Antimicrobial peptide with activity against Gram-positive and Gram-negative bacteria and against fungi. Has been tested against S.aureus (MIC=2.5 ug/mL), B.pumilus (MIC=2.5 ug/mL), B.cereus (MIC=30.0 ug/mL), E.coli (MIC=5.0 ug/mL), B.dysenteriae (MIC=10.0 ug/mL), A.cacoaceticus (MIC=30.0 ug/mL), P.aeruginosa (MIC=7.5 ug/mL) and C.albicans (MIC=1.25 ug/mL). Also shows a weak hemolytic activity. This chain is Temporin-ALg, found in Amolops loloensis (Lolokou Sucker Frog).